A 173-amino-acid polypeptide reads, in one-letter code: dCTP deaminase, dUMP-forming (173 aa).

DCTP is bound by residues 93–98, aspartate 111, 119–121, glutamine 138, and tyrosine 151; these read RSSTGR and TLE. Glutamate 121 acts as the Proton donor/acceptor in catalysis.

This sequence belongs to the dCTP deaminase family. As to quaternary structure, homotrimer.

It catalyses the reaction dCTP + 2 H2O = dUMP + NH4(+) + diphosphate. The protein operates within pyrimidine metabolism; dUMP biosynthesis; dUMP from dCTP: step 1/1. Functionally, bifunctional enzyme that catalyzes both the deamination of dCTP to dUTP and the hydrolysis of dUTP to dUMP without releasing the toxic dUTP intermediate. The polypeptide is dCTP deaminase, dUMP-forming (Clostridium botulinum (strain Eklund 17B / Type B)).